The primary structure comprises 491 residues: Proline--tRNA ligase (491 aa).

This sequence belongs to the class-II aminoacyl-tRNA synthetase family. ProS type 3 subfamily. Homodimer.

It is found in the cytoplasm. The enzyme catalyses tRNA(Pro) + L-proline + ATP = L-prolyl-tRNA(Pro) + AMP + diphosphate. Catalyzes the attachment of proline to tRNA(Pro) in a two-step reaction: proline is first activated by ATP to form Pro-AMP and then transferred to the acceptor end of tRNA(Pro). The chain is Proline--tRNA ligase from Amoebophilus asiaticus (strain 5a2).